We begin with the raw amino-acid sequence, 1307 residues long: Light-sensor Protein kinase (1307 aa).

A GAF domain is found at 215–394 (DIELLCDTIV…VFGMQLNLHV (180 aa)). Position 320 (C320) interacts with phytochromobilin. Residues 609–680 (LANEMSRVLE…RLLSLALQGE (72 aa)) enclose the PAS domain. In terms of domain architecture, PAC spans 683–739 (QNVEIKLKTFGTQTTERAVILIVNACCSRDASDFVVGVFFVGQDVTEQRMFMDRFTR). Positions 779 to 1003 (DHATGSVERL…WSFSEKFFQW (225 aa)) are hinge. The Protein kinase domain maps to 1004–1307 (IQITGSLGSG…DSYPSTEEPS (304 aa)). Residues 1010–1018 (LGSGSSATV) and K1031 each bind ATP. D1127 is a catalytic residue.

The protein in the N-terminal section; belongs to the phytochrome family. It in the C-terminal section; belongs to the protein kinase superfamily. Ser/Thr protein kinase family. In terms of assembly, homodimer. Post-translationally, contains one covalently linked phytochromobilin chromophore.

The protein localises to the cell membrane. The enzyme catalyses L-seryl-[protein] + ATP = O-phospho-L-seryl-[protein] + ADP + H(+). It carries out the reaction L-threonyl-[protein] + ATP = O-phospho-L-threonyl-[protein] + ADP + H(+). In terms of biological role, regulatory photoreceptor which exists in two forms that are reversibly interconvertible by light: the Pr form that absorbs maximally in the red region of the spectrum and the Pfr form that absorbs maximally in the far-red region. Photoconversion of Pr to Pfr induces an array of morphogenic responses, whereas reconversion of Pfr to Pr cancels the induction of those responses. Pfr controls the expression of a number of nuclear genes including those encoding the small subunit of ribulose-bisphosphate carboxylase, chlorophyll A/B binding protein, protochlorophyllide reductase, rRNA, etc. It also controls the expression of its own gene(s) in a negative feedback fashion. This is Light-sensor Protein kinase (PHY1) from Ceratodon purpureus (Fire moss).